The sequence spans 1777 residues: FERM and PDZ domain-containing protein 3 (1777 aa).

The PDZ domain maps to 21-98 (QVTVHRDPIY…FIVLTVLHTH (78 aa)). One can recognise an FERM domain in the interval 147-461 (NVLKVFLENG…GYCRLLLDSR (315 aa)). 7 disordered regions span residues 491–520 (TGGHLGKKESSYVGSVGTSPRKSSRCTPPP), 555–574 (ETRPRTKSDPTSKSSGQGYE), 622–697 (QLGP…GRHL), 832–871 (SLGRPDPNPSLQPIATGQSPGPPGARRKLPQSEGQVQGER), 1014–1216 (SAPE…PFRL), 1309–1346 (RPQATQTPVPSLRGRERDRVLPSQRQPEAGPGVSLSSP), and 1732–1765 (QQQQQQQQQQQQVAAAAGAATEHPPGSPTSATVM). Residues 502-511 (YVGSVGTSPR) show a composition bias toward polar residues. Basic and acidic residues predominate over residues 555–564 (ETRPRTKSDP). Acidic residues predominate over residues 649 to 659 (SEEEEEEEDET). 4 stretches are compositionally biased toward polar residues: residues 840–850 (PSLQPIATGQS), 1015–1035 (APETSWNSQHQLGAEVSSSPR), 1046–1056 (HLSQQEDSLPV), and 1094–1111 (LQKQGTISSQGEKAQLES). Low complexity predominate over residues 1134 to 1168 (QSPSCQSRSHSPSCQPHGHSPSSQSRGQSPSCQPR). Positions 1172-1202 (PLRSQAASRQVSTMPSRKLETTLNGAHSTSE) are enriched in polar residues. Over residues 1732–1751 (QQQQQQQQQQQQVAAAAGAA) the composition is skewed to low complexity.

The chain is FERM and PDZ domain-containing protein 3 from Homo sapiens (Human).